A 344-amino-acid polypeptide reads, in one-letter code: Polyhomeotic-like protein 2 (344 aa).

The segment covering 1-23 has biased composition (polar residues); it reads MTSGNGSSPVPTAATGNRTQNGE. The segment at 1–28 is disordered; that stretch reads MTSGNGSSPVPTAATGNRTQNGENKPPQ. The short motif at 25-53 is the HD1 element; that stretch reads KPPQAVVKPQILTHFIEGFVIQEGAQPFP. Residues 114 to 148 form an FCS-type zinc finger; that stretch reads GDGDPPKLKCELCGRVDFEYKFKRSKRFCSMACAK. Zn(2+) contacts are provided by Cys-123, Cys-126, Cys-142, and Cys-146. Positions 165-269 are disordered; the sequence is RSKLQKPTVA…LHSRDPIAMS (105 aa). The segment covering 173–183 has biased composition (basic residues); it reads VAKHARRRSRK. A compositionally biased stretch (polar residues) spans 216–233; the sequence is KLSNSQEDSSRCSDNSSY. Positions 234–248 are enriched in low complexity; it reads EEPLSPMSASSSLSR. An SAM domain is found at 280 to 344; that stretch reads WNVEDVYDFV…YARISMLKDS (65 aa).

Component of a PRC1-like complex.

The protein localises to the nucleus. Component of a Polycomb group (PcG) multiprotein PRC1-like complex, a complex class required to maintain the transcriptionally repressive state of many genes, including Hox genes, throughout development. PcG PRC1 complex acts via chromatin remodeling and modification of histones; it mediates monoubiquitination of histone H2A 'Lys-119', rendering chromatin heritably changed in its expressibility. The sequence is that of Polyhomeotic-like protein 2 (phc2) from Xenopus laevis (African clawed frog).